The primary structure comprises 289 residues: Acetyl-coenzyme A carboxylase carboxyl transferase subunit beta (289 aa).

The CoA carboxyltransferase N-terminal domain maps to 28–289 (VMTKCPKCKK…QGGGMAVWQS (262 aa)). Zn(2+) contacts are provided by C32, C35, C51, and C54. Residues 32-54 (CPKCKKIMYTKELLKNLKVCVNC) form a C4-type zinc finger.

This sequence belongs to the AccD/PCCB family. In terms of assembly, acetyl-CoA carboxylase is a heterohexamer composed of biotin carboxyl carrier protein (AccB), biotin carboxylase (AccC) and two subunits each of ACCase subunit alpha (AccA) and ACCase subunit beta (AccD). Requires Zn(2+) as cofactor.

The protein localises to the cytoplasm. The enzyme catalyses N(6)-carboxybiotinyl-L-lysyl-[protein] + acetyl-CoA = N(6)-biotinyl-L-lysyl-[protein] + malonyl-CoA. It participates in lipid metabolism; malonyl-CoA biosynthesis; malonyl-CoA from acetyl-CoA: step 1/1. Component of the acetyl coenzyme A carboxylase (ACC) complex. Biotin carboxylase (BC) catalyzes the carboxylation of biotin on its carrier protein (BCCP) and then the CO(2) group is transferred by the transcarboxylase to acetyl-CoA to form malonyl-CoA. This Bacillus mycoides (strain KBAB4) (Bacillus weihenstephanensis) protein is Acetyl-coenzyme A carboxylase carboxyl transferase subunit beta.